A 61-amino-acid polypeptide reads, in one-letter code: Metallothionein-I, hippocampal (61 aa).

At Met-1 the chain carries N-acetylmethionine. The segment at 1-29 is beta; that stretch reads MDPNCSCATGDSCACASTCKCKECKCTSC. A divalent metal cation is bound by residues Cys-5, Cys-7, Cys-13, Cys-15, Cys-19, Cys-21, Cys-24, Cys-26, Cys-29, Cys-33, Cys-34, Cys-36, Cys-37, Cys-41, Cys-44, Cys-48, Cys-50, and Cys-57. The tract at residues 30–61 is alpha; that stretch reads KKSCCSCCPVGCAKCAQGCICKGASDKCSCCA. The residue at position 58 (Ser-58) is a Phosphoserine. Positions 59 and 60 each coordinate a divalent metal cation.

This sequence belongs to the metallothionein superfamily. Type 1 family.

Metallothioneins have a high content of cysteine residues that bind various heavy metals; these proteins are transcriptionally regulated by both heavy metals and glucocorticoids. This isoform may play a role in regulating the transport, accumulation, and compartmentation of zinc in the hippocampus. The sequence is that of Metallothionein-I, hippocampal from Bos taurus (Bovine).